The sequence spans 98 residues: NADH-ubiquinone oxidoreductase chain 4L (98 aa).

The next 3 membrane-spanning stretches (helical) occupy residues 1 to 21 (MSLV…GLLM), 30 to 50 (LLCL…TILT), and 61 to 81 (IVLL…LVMV).

The protein belongs to the complex I subunit 4L family. In terms of assembly, core subunit of respiratory chain NADH dehydrogenase (Complex I) which is composed of 45 different subunits.

The protein localises to the mitochondrion inner membrane. It carries out the reaction a ubiquinone + NADH + 5 H(+)(in) = a ubiquinol + NAD(+) + 4 H(+)(out). Core subunit of the mitochondrial membrane respiratory chain NADH dehydrogenase (Complex I) which catalyzes electron transfer from NADH through the respiratory chain, using ubiquinone as an electron acceptor. Part of the enzyme membrane arm which is embedded in the lipid bilayer and involved in proton translocation. This is NADH-ubiquinone oxidoreductase chain 4L (MT-ND4L) from Crocidura russula (Greater white-toothed shrew).